A 249-amino-acid chain; its full sequence is ATP synthase subunit a, chloroplastic (249 aa).

5 helical membrane-spanning segments follow: residues 40-60 (QVLITSWVVIAILLGSSVLAI), 97-117 (VPFIGTLFLFIFVSNWSGALL), 136-156 (INTTVALALLTSVAYFYAGLS), 201-221 (LVVVVLVSLVPLVVPIPVMFL), and 222-242 (GLFTSGIQALIFATLAAAYIG).

The protein belongs to the ATPase A chain family. In terms of assembly, F-type ATPases have 2 components, CF(1) - the catalytic core - and CF(0) - the membrane proton channel. CF(1) has five subunits: alpha(3), beta(3), gamma(1), delta(1), epsilon(1). CF(0) has four main subunits: a, b, b' and c.

The protein resides in the plastid. The protein localises to the chloroplast thylakoid membrane. Its function is as follows. Key component of the proton channel; it plays a direct role in the translocation of protons across the membrane. This is ATP synthase subunit a, chloroplastic from Olimarabidopsis pumila (Dwarf rocket).